Consider the following 720-residue polypeptide: Portal protein (720 aa).

Belongs to the p22likevirus portal protein family. As to quaternary structure, homododecamer.

The protein localises to the virion. Functionally, forms the portal vertex of the capsid. This portal plays critical roles in head assembly, genome packaging, neck/tail attachment, and genome ejection. Procapsid assembly may initiate with a nucleation complex composed of portal and scaffolding proteins. The portal protein multimerizes as a single ring-shaped homododecamer arranged around a central channel. The chain is Portal protein (19) from Acyrthosiphon pisum secondary endosymbiont phage 1 (Bacteriophage APSE-1).